The primary structure comprises 657 residues: Translation factor GUF1, mitochondrial (657 aa).

Residues 1 to 39 (MRGCLQSVKWLTSAVRQSQSLTSSTRFPRRLFNTSTLHY) constitute a mitochondrion transit peptide. The region spanning 59 to 239 (ERFRNFCIVA…TVIEQVPAPV (181 aa)) is the tr-type G domain. GTP contacts are provided by residues 68 to 75 (AHVDHGKS), 132 to 136 (DTPGH), and 186 to 189 (NKVD).

This sequence belongs to the TRAFAC class translation factor GTPase superfamily. Classic translation factor GTPase family. LepA subfamily.

The protein localises to the mitochondrion inner membrane. It catalyses the reaction GTP + H2O = GDP + phosphate + H(+). In terms of biological role, promotes mitochondrial protein synthesis. May act as a fidelity factor of the translation reaction, by catalyzing a one-codon backward translocation of tRNAs on improperly translocated ribosomes. Binds to mitochondrial ribosomes in a GTP-dependent manner. The protein is Translation factor GUF1, mitochondrial of Blastomyces gilchristii (strain SLH14081) (Blastomyces dermatitidis).